The chain runs to 261 residues: CD40 ligand (261 aa).

The Cytoplasmic segment spans residues 1–22 (MIETYNQTSPRSAATGLPISMK). A helical; Signal-anchor for type II membrane protein membrane pass occupies residues 23–46 (IFMYLLTVFLITQMIGSALFAVYL). Residues 47 to 261 (HRRLDKIEDE…GFTSFGLLKL (215 aa)) are Extracellular-facing. The THD domain occupies 122-261 (IAAHVISEAS…GFTSFGLLKL (140 aa)). Cysteines 178 and 218 form a disulfide. The N-linked (GlcNAc...) (complex) asparagine; alternate glycan is linked to Asn-240. Asn-240 carries N-linked (GlcNAc...) (high mannose) asparagine; alternate glycosylation.

Belongs to the tumor necrosis factor family. As to quaternary structure, homotrimer. Interacts with isoform 3 of CD28. CD40 ligand, soluble form: Exists as either a monomer or a homotrimer. Forms a ternary complex between CD40 and integrins for CD40-CD40LG signaling. The soluble form derives from the membrane form by proteolytic processing. Post-translationally, N-linked glycan is a mixture of high mannose and complex type. Glycan structure does not influence binding affinity to CD40. In terms of processing, not O-glycosylated. In terms of tissue distribution, specifically expressed on activated CD4+ T-lymphocytes.

It localises to the cell membrane. The protein localises to the cell surface. The protein resides in the secreted. Functionally, cytokine that acts as a ligand to CD40/TNFRSF5. Costimulates T-cell proliferation and cytokine production. Its cross-linking on T-cells generates a costimulatory signal which enhances the production of IL4 and IL10 in conjunction with the TCR/CD3 ligation and CD28 costimulation. Induces the activation of NF-kappa-B. Induces the activation of kinases MAPK8 and PAK2 in T-cells. Induces tyrosine phosphorylation of isoform 3 of CD28. Mediates B-cell proliferation in the absence of co-stimulus as well as IgE production in the presence of IL4. Involved in immunoglobulin class switching. In terms of biological role, acts as a ligand for integrins, specifically ITGA5:ITGB1 and ITGAV:ITGB3; both integrins and the CD40 receptor are required for activation of CD40-CD40LG signaling, which have cell-type dependent effects, such as B-cell activation, NF-kappa-B signaling and anti-apoptotic signaling. This chain is CD40 ligand (CD40LG), found in Homo sapiens (Human).